The primary structure comprises 133 residues: uncharacterized protein (133 aa).

Residues 107-133 form a disordered region; the sequence is TSHHRAAGLQSQHAPGSGRVRITGGKV.

This is an uncharacterized protein from Homo sapiens (Human).